We begin with the raw amino-acid sequence, 80 residues long: Nuclear protein 1 (80 aa).

Disordered stretches follow at residues 1 to 21 and 38 to 80; these read MATL…EDED and VGGG…KAWR. Over residues 61–80 the composition is skewed to basic and acidic residues; the sequence is GHERKLLTKFQNSERKKAWR. Residues 64–80 carry the Nuclear localization signal motif; it reads RKLLTKFQNSERKKAWR.

Belongs to the NUPR family. Monomer. Directly interacts with MSL1 and binds MORF4L1, two components of histone acetyltransferase complex; the interaction with MORF4L1 may be mediated by MSL1. Interacts with EP300; this interaction enhances the effect of EP300 on PAX2 transcription factor activity. Interacts with PAXIP1; this interaction prevents PAXIP1 inhibition of PAX2 transcription factor activity. Interacts with COPS5; this interaction allows COPS5-dependent CDKN1B nuclear to cytoplasm translocation. Interacts with RNF2. Interacts with FOXO3; this interaction represses FOXO3 transactivation. Interacts with PTMA; regulates apoptotic process. Interacts with MYOD1, EP300 and DDX5; this interaction coordinates the association of anti-proliferative and pro-myogenic proteins at the myogenin promoter. Interacts with TP53; interaction is stress-dependent. Forms a complex with EP300 and TP53; this complex binds CDKN1A promoter leading to transcriptional induction of CDKN1A. In terms of processing, phosphorylated. Phosphorylation promotes DNA-binding activity. Post-translationally, acetylated. As to expression, highly expressed in pancreas and both ovaries and testes.

It localises to the nucleus. It is found in the cytoplasm. The protein localises to the perinuclear region. Its function is as follows. Transcription regulator that converts stress signals into a program of gene expression that empowers cells with resistance to the stress induced by a change in their microenvironment. Thereby participates in the regulation of many processes namely cell-cycle, apoptosis, autophagy and DNA repair responses. Controls cell cycle progression and protects cells from genotoxic stress induced by doxorubicin through the complex formation with TP53 and EP300 that binds CDKN1A promoter leading to transcriptional induction of CDKN1A. Protects pancreatic cancer cells from stress-induced cell death by binding the RELB promoter and activating its transcription, leading to IER3 transactivation. Negatively regulates apoptosis through interaction with PTMA. Inhibits autophagy-induced apoptosis in cardiac cells through FOXO3 interaction, inducing cytoplasmic translocation of FOXO3 thereby preventing the FOXO3 association with the pro-autophagic BNIP3 promoter. Inhibits cell growth and facilitates programmed cell death by apoptosis after adriamycin-induced DNA damage through transactivation of TP53. Regulates methamphetamine-induced apoptosis and autophagy through DDIT3-mediated endoplasmic reticulum stress pathway. Participates in DNA repair following gamma-irradiation by facilitating DNA access of the transcription machinery through interaction with MSL1 leading to inhibition of histone H4' Lys-16' acetylation (H4K16ac). Coactivator of PAX2 transcription factor activity, both by recruiting the EP300 cofactor to increase PAX2 transcription factor activity and by binding PAXIP1 to suppress PAXIP1-induced inhibition on PAX2. Positively regulates cell cycle progression through interaction with COPS5 inducing cytoplasmic translocation of CDKN1B leading to the CDKN1B degradation. Coordinates, through its interaction with EP300, the assiociation of MYOD1, EP300 and DDX5 to the MYOG promoter, leading to inhibition of cell-cycle progression and myogenic differentiation promotion. Negatively regulates beta cell proliferation via inhibition of cell-cycle regulatory genes expression through the suppression of their promoter activities. Also required for LHB expression and ovarian maturation. Exacerbates CNS inflammation and demyelination upon cuprizone treatment. The chain is Nuclear protein 1 from Mus musculus (Mouse).